The chain runs to 93 residues: Acylphosphatase (93 aa).

The 87-residue stretch at 7–93 (RLTAWVHGRV…ADAIAGFTER (87 aa)) folds into the Acylphosphatase-like domain. Catalysis depends on residues R22 and N40.

Belongs to the acylphosphatase family.

The catalysed reaction is an acyl phosphate + H2O = a carboxylate + phosphate + H(+). This chain is Acylphosphatase (acyP), found in Mycolicibacterium vanbaalenii (strain DSM 7251 / JCM 13017 / BCRC 16820 / KCTC 9966 / NRRL B-24157 / PYR-1) (Mycobacterium vanbaalenii).